The chain runs to 346 residues: Holliday junction branch migration complex subunit RuvB (346 aa).

Polar residues predominate over residues 1 to 11; that stretch reads MTEQRTIASSA. Residues 1-20 are disordered; the sequence is MTEQRTIASSATREDEAADA. The large ATPase domain (RuvB-L) stretch occupies residues 1 to 183; it reads MTEQRTIASS…FGIVQRLEFY (183 aa). ATP-binding positions include Ile-22, Arg-23, Gly-64, Lys-67, Thr-68, Thr-69, 130–132, Arg-173, Tyr-183, and Arg-220; that span reads EDF. Thr-68 provides a ligand contact to Mg(2+). Positions 184-254 are small ATPAse domain (RuvB-S); the sequence is SPQELTRIVI…VAQAAMQMLK (71 aa). The segment at 257 to 346 is head domain (RuvB-H); that stretch reads PEGFDELDRR…PAIGEPGDLF (90 aa). Residues Arg-293, Arg-312, and Arg-317 each contribute to the DNA site.

Belongs to the RuvB family. In terms of assembly, homohexamer. Forms an RuvA(8)-RuvB(12)-Holliday junction (HJ) complex. HJ DNA is sandwiched between 2 RuvA tetramers; dsDNA enters through RuvA and exits via RuvB. An RuvB hexamer assembles on each DNA strand where it exits the tetramer. Each RuvB hexamer is contacted by two RuvA subunits (via domain III) on 2 adjacent RuvB subunits; this complex drives branch migration. In the full resolvosome a probable DNA-RuvA(4)-RuvB(12)-RuvC(2) complex forms which resolves the HJ.

The protein resides in the cytoplasm. The catalysed reaction is ATP + H2O = ADP + phosphate + H(+). Functionally, the RuvA-RuvB-RuvC complex processes Holliday junction (HJ) DNA during genetic recombination and DNA repair, while the RuvA-RuvB complex plays an important role in the rescue of blocked DNA replication forks via replication fork reversal (RFR). RuvA specifically binds to HJ cruciform DNA, conferring on it an open structure. The RuvB hexamer acts as an ATP-dependent pump, pulling dsDNA into and through the RuvAB complex. RuvB forms 2 homohexamers on either side of HJ DNA bound by 1 or 2 RuvA tetramers; 4 subunits per hexamer contact DNA at a time. Coordinated motions by a converter formed by DNA-disengaged RuvB subunits stimulates ATP hydrolysis and nucleotide exchange. Immobilization of the converter enables RuvB to convert the ATP-contained energy into a lever motion, pulling 2 nucleotides of DNA out of the RuvA tetramer per ATP hydrolyzed, thus driving DNA branch migration. The RuvB motors rotate together with the DNA substrate, which together with the progressing nucleotide cycle form the mechanistic basis for DNA recombination by continuous HJ branch migration. Branch migration allows RuvC to scan DNA until it finds its consensus sequence, where it cleaves and resolves cruciform DNA. This is Holliday junction branch migration complex subunit RuvB from Xanthomonas campestris pv. campestris (strain 8004).